Consider the following 143-residue polypeptide: MVAVVLVGHGSRLPYSRQVVEKIAEYVEEMGDFETVEVGFMELCEPTVQEAVKKAAESGVDKIVVVPVFLAHGVHTKRDIPKMLGLEPEWDDDEDDHDHHHHHHRDYTPVDVDAEIVYAEPLGADPRIAEIVIDRIKEALGEE.

Residue His-9 is the Proton acceptor of the active site. A Co(2+)-binding site is contributed by His-9. A Ni(2+)-binding site is contributed by His-9. Residues Glu-45 and 70-75 each bind substrate; that span reads LAHGVH. His-75 is a Co(2+) binding site. His-75 contributes to the Ni(2+) binding site.

It belongs to the CbiX family. CbiXS subfamily. Homotetramer; dimer of dimers.

It catalyses the reaction Co-sirohydrochlorin + 2 H(+) = sirohydrochlorin + Co(2+). The enzyme catalyses Ni-sirohydrochlorin + 2 H(+) = sirohydrochlorin + Ni(2+). It participates in cofactor biosynthesis; adenosylcobalamin biosynthesis; cob(II)yrinate a,c-diamide from sirohydrochlorin (anaerobic route): step 1/10. Functionally, catalyzes the insertion of Co(2+) into sirohydrochlorin as part of the anaerobic pathway to cobalamin biosynthesis. Involved in the biosynthesis of the unique nickel-containing tetrapyrrole coenzyme F430, the prosthetic group of methyl-coenzyme M reductase (MCR), which plays a key role in methanogenesis and anaerobic methane oxidation. Catalyzes the insertion of Ni(2+) into sirohydrochlorin to yield Ni-sirohydrochlorin. This Methanopyrus kandleri (strain AV19 / DSM 6324 / JCM 9639 / NBRC 100938) protein is Sirohydrochlorin cobaltochelatase.